We begin with the raw amino-acid sequence, 477 residues long: Methylenetetrahydrofolate--tRNA-(uracil-5-)-methyltransferase TrmFO (477 aa).

15-20 lines the FAD pocket; sequence GAGLAG.

Belongs to the MnmG family. TrmFO subfamily. It depends on FAD as a cofactor.

The protein resides in the cytoplasm. It catalyses the reaction uridine(54) in tRNA + (6R)-5,10-methylene-5,6,7,8-tetrahydrofolate + NADH + H(+) = 5-methyluridine(54) in tRNA + (6S)-5,6,7,8-tetrahydrofolate + NAD(+). The enzyme catalyses uridine(54) in tRNA + (6R)-5,10-methylene-5,6,7,8-tetrahydrofolate + NADPH + H(+) = 5-methyluridine(54) in tRNA + (6S)-5,6,7,8-tetrahydrofolate + NADP(+). Functionally, catalyzes the folate-dependent formation of 5-methyl-uridine at position 54 (M-5-U54) in all tRNAs. The sequence is that of Methylenetetrahydrofolate--tRNA-(uracil-5-)-methyltransferase TrmFO from Rhodopseudomonas palustris (strain BisB5).